We begin with the raw amino-acid sequence, 700 residues long: ATP-dependent zinc metalloprotease FtsH (700 aa).

Topologically, residues 1-20 are cytoplasmic; sequence MSSDNGSGRQGGDRGGSTGY. A helical transmembrane segment spans residues 21 to 41; sequence NLLMYLGFGAIIATLVALYVL. At 42–171 the chain is on the periplasmic side; the sequence is QMFQTSLDYT…FRHADPPGPW (130 aa). Residues 172-192 form a helical membrane-spanning segment; sequence EQHSQLIIGMLLAAMLIYIVV. The Cytoplasmic portion of the chain corresponds to 193 to 700; the sequence is RRLSAAGSPM…ITAPATERSG (508 aa). 262 to 269 is a binding site for ATP; the sequence is GPPGTGKT. His484 contacts Zn(2+). Residue Glu485 is part of the active site. Zn(2+) contacts are provided by His488 and Asp561.

In the central section; belongs to the AAA ATPase family. It in the C-terminal section; belongs to the peptidase M41 family. In terms of assembly, homohexamer. It depends on Zn(2+) as a cofactor.

The protein resides in the cell inner membrane. Functionally, acts as a processive, ATP-dependent zinc metallopeptidase for both cytoplasmic and membrane proteins. Plays a role in the quality control of integral membrane proteins. The chain is ATP-dependent zinc metalloprotease FtsH from Pirellula staleyi (strain ATCC 27377 / DSM 6068 / ICPB 4128) (Pirella staleyi).